The primary structure comprises 21 residues: thr operon leader peptide (21 aa).

This sequence belongs to the thr operon leader peptide family.

In terms of biological role, this protein is involved in control of the biosynthesis of threonine. The sequence is that of thr operon leader peptide from Shigella boydii serotype 18 (strain CDC 3083-94 / BS512).